Here is a 94-residue protein sequence, read N- to C-terminus: Large ribosomal subunit protein eL14 (94 aa).

The protein belongs to the eukaryotic ribosomal protein eL14 family.

The chain is Large ribosomal subunit protein eL14 from Methanopyrus kandleri (strain AV19 / DSM 6324 / JCM 9639 / NBRC 100938).